A 612-amino-acid chain; its full sequence is DNA damage checkpoint protein 1 (612 aa).

The residue at position 436 (Ser436) is a Phosphoserine. The disordered stretch occupies residues Gly576 to Asp612. Over residues Ser585–Glu596 the composition is skewed to basic and acidic residues.

The protein belongs to the DDC1 family. Component of the checkpoint clamp complex composed of DDC1, MEC3 and RAD17. The interaction with MEC3 is performed in a RAD17-dependent manner. The checkpoint clamp complex loads onto DNA in an ATP-dependent manner through its interaction with the RFC-RAD4 checkpoint clamp loader complex. Interacts with the DNA polymerase zeta subunit REV7 and DPB11. Phosphorylated during cell cycle S-phase and in response to DNA damage. This phosphorylation is MEC14 dependent. Also hosphorylated by CDC28.

The protein localises to the cytoplasm. It localises to the nucleus. In terms of biological role, component of the checkpoint clamp complex involved in the surveillance mechanism that allows the DNA repair pathways to act to restore the integrity of the DNA prior to DNA synthesis or separation of the replicated chromosomes. Associates with sites of DNA damage and modulates the MEC1 signaling pathway and the activation of RAD53 in response to DNA damage at phase G1. The complex also physically regulates DNA polymerase zeta-dependent mutagenesis by controlling the access of polymerase zeta to damaged DNA. In Saccharomyces cerevisiae (strain ATCC 204508 / S288c) (Baker's yeast), this protein is DNA damage checkpoint protein 1 (DDC1).